The following is a 393-amino-acid chain: Arginine biosynthesis bifunctional protein ArgJ (393 aa).

The substrate site is built by Thr145, Lys171, Thr182, Glu265, Asn388, and Ser393. The active-site Nucleophile is Thr182.

It belongs to the ArgJ family. Heterotetramer of two alpha and two beta chains.

The protein localises to the cytoplasm. It catalyses the reaction N(2)-acetyl-L-ornithine + L-glutamate = N-acetyl-L-glutamate + L-ornithine. The catalysed reaction is L-glutamate + acetyl-CoA = N-acetyl-L-glutamate + CoA + H(+). It participates in amino-acid biosynthesis; L-arginine biosynthesis; L-ornithine and N-acetyl-L-glutamate from L-glutamate and N(2)-acetyl-L-ornithine (cyclic): step 1/1. It functions in the pathway amino-acid biosynthesis; L-arginine biosynthesis; N(2)-acetyl-L-ornithine from L-glutamate: step 1/4. In terms of biological role, catalyzes two activities which are involved in the cyclic version of arginine biosynthesis: the synthesis of N-acetylglutamate from glutamate and acetyl-CoA as the acetyl donor, and of ornithine by transacetylation between N(2)-acetylornithine and glutamate. This Nitratidesulfovibrio vulgaris (strain ATCC 29579 / DSM 644 / CCUG 34227 / NCIMB 8303 / VKM B-1760 / Hildenborough) (Desulfovibrio vulgaris) protein is Arginine biosynthesis bifunctional protein ArgJ.